The primary structure comprises 225 residues: Prepilin leader peptidase/N-methyltransferase (225 aa).

The Periplasmic segment spans residues 1–2 (MT). The helical transmembrane segment at 3–23 (MLLPLFILVGFIADYFVNAIA) threads the bilayer. Topologically, residues 24-67 (YHLSPLEDKTALTFRQVLVHFRQKKYAWHDTVPLILCVAAAIAC) are cytoplasmic. A helical membrane pass occupies residues 68 to 88 (ALAPFTPIVTGALFLYFCFVL). Over 89-103 (TLSVIDFRTQLLPDK) the chain is Periplasmic. A helical membrane pass occupies residues 104 to 124 (LTLPLLWLGLVFNAQYGLIDL). Residues 125-127 (HDA) lie on the Cytoplasmic side of the membrane. A helical membrane pass occupies residues 128–148 (VYGAVAGYGVLWCVYWGVWLV). At 149-174 (CHKEGLGYGDFKLLAAAGAWCGWQTL) the chain is on the periplasmic side. Residues 175-195 (PMILLIASLGGIGYAIVSQLL) form a helical membrane-spanning segment. Over 196–202 (QRRTITT) the chain is Cytoplasmic. The helical transmembrane segment at 203-223 (IAFGPWLALGSMINLGYLAWI) threads the bilayer. At 224-225 (SY) the chain is on the periplasmic side.

Belongs to the peptidase A24 family.

It localises to the cell inner membrane. It catalyses the reaction Typically cleaves a -Gly-|-Phe- bond to release an N-terminal, basic peptide of 5-8 residues from type IV prepilin, and then N-methylates the new N-terminal amino group, the methyl donor being S-adenosyl-L-methionine.. Plays a role in type II pseudopili formation by proteolytically removing the leader sequence from substrate proteins and subsequently monomethylating the alpha-amino group of the newly exposed N-terminal phenylalanine. Substrates include proteins required for biogenesis of the type II general secretory apparatus. The protein is Prepilin leader peptidase/N-methyltransferase (gspO) of Escherichia coli (strain K12).